Here is a 94-residue protein sequence, read N- to C-terminus: (2R)-sulfolactate sulfo-lyase subunit alpha (94 aa).

Residues 16–90 (VVVVEGVEAG…GEHVHVHNVK (75 aa)) enclose the AFP-like domain.

In terms of assembly, (2R)-sulfolactate sulfo-lyase is composed of a SuyA and a SuyB subunit.

It is found in the cytoplasm. It catalyses the reaction (2R)-3-sulfolactate = sulfite + pyruvate + H(+). Together with SuyB, desulfonates sulfolactate to pyruvate and sulfite. This is (2R)-sulfolactate sulfo-lyase subunit alpha (suyA) from Chromohalobacter salexigens (strain ATCC BAA-138 / DSM 3043 / CIP 106854 / NCIMB 13768 / 1H11).